The primary structure comprises 175 residues: MVSAWCSIALALLLALHEGKGQAAATLEQPASAPKGRGPHLRFRRCSCNSWLDKECVYFCHLDIIWVNTAGQTAPYGLGNPPRRRRRSLPKRCECSTAGDSACATFCHRRHWPEAVVAPSSQAPAAVLKTGKMWTAEGDLLRKLRDISATKLRFARLQPEVTRKAIPAYSRWRKR.

The N-terminal stretch at 1 to 21 is a signal peptide; it reads MVSAWCSIALALLLALHEGKG. A propeptide spanning residues 22–43 is cleaved from the precursor; sequence QAAATLEQPASAPKGRGPHLRF. 2 disulfides stabilise this stretch: cysteine 46/cysteine 60 and cysteine 48/cysteine 56. The propeptide occupies 67 to 175; sequence VNTAGQTAPY…IPAYSRWRKR (109 aa). Positions 93–108 are endothelin-like; that stretch reads CECSTAGDSACATFCH.

This sequence belongs to the endothelin/sarafotoxin family.

The protein localises to the secreted. In terms of biological role, vasoconstrictor. This Mus musculus (Mouse) protein is Endothelin-2 (Edn2).